Consider the following 230-residue polypeptide: Sugar fermentation stimulation protein homolog (230 aa).

It belongs to the SfsA family.

This is Sugar fermentation stimulation protein homolog from Clostridium perfringens (strain ATCC 13124 / DSM 756 / JCM 1290 / NCIMB 6125 / NCTC 8237 / Type A).